Here is a 691-residue protein sequence, read N- to C-terminus: MALVTLQVSSLDVGSNITPVQDDEKSRRKRMQRRQSFVMVKGAALLLQDEGEPIDTREPLSSSGPNEQQIHLQSMLRLLREEDTLTLAVRLEPVRSCLTRYLLVVSSTGKSNVEETLLLGVDFPHDGSLCCTIGTVLPIWSNTQVFLDGDGGFTVTSGMDIRTFKPISVQTMWSLLQMLHKACESALSNNVISSSLYSGLIYYQSNRSSPQVCLNAWTASPDIESARRDPATPEREETERIIKLKLRDILRESDLENITSKEVRSALEQHTLCALQDYKEFIDNEMIIILAQMDRPSEIFPYLYLGSEWNASNLEELQKNKVSHILNVTREIDNFFPELFMYLNIRVLDEENTNLMQYWKETHAFITTARHQGSRVLVHCKMGVSRSASTVIAYAMKEYEWTLETAIRHVKERRSIVQPNAGFMRQLQTYQGILGASKQRHSYLWDPSSAPSLPLMSPPPKNFSSPTTSPLTPRLQKMNLRTLMRSISEMEAADTISEEKESTVVLEETTLKQNFNVLESSSNNLQVTPKRNEHVLSKEQIIQEEKKVMELEKGPEWVVKNNVLEEMKETEERELPNFELPMSLNQSRERDQETIKESSVITQGSSSLDEVFESSTPTRSPEMASYACQKIQYFEQHSEGYSKVCFVDNLQSVSEEEKVTLVSKQLQTDEHGERKARITRQQNVIDTHEEL.

Residues 236–291 (EETERIIKLKLRDILRESDLENITSKEVRSALEQHTLCALQDYKEFIDNEMIIILA) enclose the DEK-C domain. In terms of domain architecture, Tyrosine-protein phosphatase spans 295-436 (RPSEIFPYLY…LQTYQGILGA (142 aa)). Cys-380 serves as the catalytic Phosphocysteine intermediate. Residues 532-580 (NEHVLSKEQIIQEEKKVMELEKGPEWVVKNNVLEEMKETEERELPNFEL) adopt a coiled-coil conformation. The segment at 585–620 (NQSRERDQETIKESSVITQGSSSLDEVFESSTPTRS) is disordered. Residues 587 to 596 (SRERDQETIK) show a composition bias toward basic and acidic residues. The span at 597–619 (ESSVITQGSSSLDEVFESSTPTR) shows a compositional bias: polar residues.

Belongs to the protein-tyrosine phosphatase family. As to quaternary structure, interacts with actin and this stimulates phosphatase activity.

It localises to the cytoplasm. Its subcellular location is the cytoskeleton. The protein resides in the cleavage furrow. It is found in the midbody. It catalyses the reaction O-phospho-L-tyrosyl-[protein] + H2O = L-tyrosyl-[protein] + phosphate. The catalysed reaction is O-phospho-L-seryl-[protein] + H2O = L-seryl-[protein] + phosphate. It carries out the reaction O-phospho-L-threonyl-[protein] + H2O = L-threonyl-[protein] + phosphate. Its function is as follows. Protein phosphatase which regulates actin filament dynamics. Dephosphorylates and activates the actin binding/depolymerizing factor cofilin, which subsequently binds to actin filaments and stimulates their disassembly. Required for completion of the gastrulation movement and for cytokinesis. In Xenopus laevis (African clawed frog), this protein is Protein phosphatase Slingshot homolog (ssh).